The chain runs to 458 residues: Ammonium transporter Rh type B (458 aa).

The Cytoplasmic segment spans residues 1 to 13; sequence MAGSSRRAGGRRL. A helical membrane pass occupies residues 14–34; sequence QLPLLCLLLQGATAILFAVFV. Topologically, residues 35–61 are extracellular; that stretch reads RYNHETDAALWHWGNHSNPDNEFYFRY. N-linked (GlcNAc...) asparagine glycosylation is present at Asn49. The chain crosses the membrane as a helical span at residues 62-82; it reads PSFQDVHTMIFVGFGFLMAFL. Topologically, residues 83–86 are cytoplasmic; that stretch reads QRYG. A helical membrane pass occupies residues 87-107; the sequence is FSSVGFTFLLAAFALQWSTLV. Residues 108 to 124 lie on the Extracellular side of the membrane; it reads QGFLHTFHGGHIHIGVE. A helical membrane pass occupies residues 125-145; sequence SMINADFCAGAVLISFGAILG. Topologically, residues 146–149 are cytoplasmic; sequence KTGP. Residues 150–170 traverse the membrane as a helical segment; sequence AQLLLMALLEVVLFGLNEFVL. Residues 171–178 are Extracellular-facing; it reads LSLLGVKD. Residues 179–201 traverse the membrane as a helical segment; sequence AGGSMTIHTFGAYFGLVLSRVLY. The Cytoplasmic portion of the chain corresponds to 202 to 219; the sequence is RPQLEKSKHRQSSVYHSD. The chain crosses the membrane as a helical span at residues 220 to 240; sequence LFAMIGTIFLWIFWPSFNSAP. Over 241 to 251 the chain is Extracellular; that stretch reads TPLGDGQHRTA. A helical membrane pass occupies residues 252-272; the sequence is LNTYYSLTASTLSTFALSALV. The Cytoplasmic segment spans residues 273–282; sequence GRDGRLDMVH. Residues 283–303 traverse the membrane as a helical segment; that stretch reads VQNAALAGGVVVGTSAEMMLT. Pro304 is a topological domain (extracellular). Residues 305–325 form a helical membrane-spanning segment; sequence FGALAAGFLAGTVSTLGFKFF. Topologically, residues 326-346 are cytoplasmic; it reads TPILESKFKIQDTCGVHNLHG. The helical transmembrane segment at 347–367 threads the bilayer; the sequence is MPGVLGALLGVLVAGLATHDS. Topologically, residues 368–393 are extracellular; that stretch reads YGEGLESVFPLIAEGQRSSTSQALHQ. Residues 394 to 414 form a helical membrane-spanning segment; the sequence is LFGLFVTLIFASVGGGLGGLL. Topologically, residues 415-458 are cytoplasmic; the sequence is LRLPFLDSPPDSQCYEDQIYWEVPEEHADLAQGSLRPEEPDTQA. Residues 416–424 are interaction with ANK3; the sequence is RLPFLDSPP. A Basolateral sorting signal motif is present at residues 429 to 432; sequence YEDQ.

It belongs to the ammonium transporter (TC 2.A.49) family. Rh subfamily. As to quaternary structure, interacts (via C-terminus) with ANK2 and ANK3; required for targeting to the basolateral membrane. In terms of processing, N-glycosylated.

The protein localises to the cell membrane. Its subcellular location is the basolateral cell membrane. The catalysed reaction is NH4(+)(in) = NH4(+)(out). It carries out the reaction methylamine(out) = methylamine(in). It catalyses the reaction CO2(out) = CO2(in). Functionally, ammonium transporter involved in the maintenance of acid-base homeostasis. Transports ammonium and its related derivative methylammonium across the basolateral plasma membrane of epithelial cells likely contributing to renal transepithelial ammonia transport and ammonia metabolism. May transport either NH4(+) or NH3 ammonia species predominantly mediating an electrogenic NH4(+) transport. May act as a CO2 channel providing for renal acid secretion. The sequence is that of Ammonium transporter Rh type B (RHBG) from Sus scrofa (Pig).